We begin with the raw amino-acid sequence, 99 residues long: NADH-quinone oxidoreductase subunit K (99 aa).

3 helical membrane passes run 3-23, 28-48, and 62-82; these read PMYYLYLSAVLFTLGAVGVLL, IIVFMCVELMLNAANLALVTF, and FFVMVVAAAEVVVGLAIIVAI.

It belongs to the complex I subunit 4L family. In terms of assembly, NDH-1 is composed of 14 different subunits. Subunits NuoA, H, J, K, L, M, N constitute the membrane sector of the complex.

Its subcellular location is the cell membrane. The enzyme catalyses a quinone + NADH + 5 H(+)(in) = a quinol + NAD(+) + 4 H(+)(out). NDH-1 shuttles electrons from NADH, via FMN and iron-sulfur (Fe-S) centers, to quinones in the respiratory chain. The immediate electron acceptor for the enzyme in this species is believed to be a menaquinone. Couples the redox reaction to proton translocation (for every two electrons transferred, four hydrogen ions are translocated across the cytoplasmic membrane), and thus conserves the redox energy in a proton gradient. This is NADH-quinone oxidoreductase subunit K from Acidothermus cellulolyticus (strain ATCC 43068 / DSM 8971 / 11B).